A 635-amino-acid chain; its full sequence is MMRGLLLAGALGLPLAVLAHPTHHAHGLQRRTVDLNSFRLHQAAKYINATESSSDVSSSFSPFTEQSYVETATQLVKNILPDATFRVVKDHYIGSNGVAHVNFRQTAHGLDIDNADFNVNVGKNGKIFSYGHSFYTGKIPDANPLTKRDYTDPVAALRGTNEALQLSITLDQVSTEATEDKESFNFKGVSGTVSDPKAQLVYLVKEDGSLALTWKVETDIDSNWLLTYIDANTGKDVHGVVDYVAEADYQVYAWGINDPTEGPRTVISDPWDSSASAFTWISDGENNYTTTRGNNGIAQSNPTGGSQYLKNYRPDSPDLKFQYPYSLNATPPESYIDASITQLFYTANTYHDLLYTLGFNEEAGNFQYDNNGKGGAGNDYVILNAQDGSGTNNANFATPPDGQPGRMRMYIWTESQPYRDGSFEAGIVIHEYTHGLSNRLTGGPANSRCLNALESGGMGEGWGDFMATAIRLKAGDTHSTDYTMGEWAANKKGGIRAYPFSTSLETNPLTYTSLNELDEVHAIGAVWANVLYELLWNLIDKHGKNDGPKPEFKDGVPTDGKYLAMKLVIDGMALQPCNPNCVQARDAILDADKALTDGANKCEIWKAFAKRGLGEGAEYHASRRVGSDKVPSDAC.

The signal sequence occupies residues 1-19 (MMRGLLLAGALGLPLAVLA). A propeptide spanning residues 20-246 (HPTHHAHGLQ…VHGVVDYVAE (227 aa)) is cleaved from the precursor. N-linked (GlcNAc...) asparagine glycosylation is present at Asn287. The segment covering 290 to 309 (TTRGNNGIAQSNPTGGSQYL) has biased composition (polar residues). A disordered region spans residues 290–311 (TTRGNNGIAQSNPTGGSQYLKN). Residue His430 participates in Zn(2+) binding. The active site involves Glu431. His434 contributes to the Zn(2+) binding site.

It belongs to the peptidase M36 family. Zn(2+) is required as a cofactor.

The protein resides in the secreted. In terms of biological role, secreted metalloproteinase that allows assimilation of proteinaceous substrates. The sequence is that of Extracellular metalloproteinase mep (mep) from Aspergillus flavus (strain ATCC 200026 / FGSC A1120 / IAM 13836 / NRRL 3357 / JCM 12722 / SRRC 167).